A 298-amino-acid polypeptide reads, in one-letter code: N-acetylmuramic acid 6-phosphate etherase (298 aa).

The SIS domain occupies 55-218 (IHTQVSGGGR…STGLMIKSGK (164 aa)). Residue E83 is the Proton donor of the active site. E114 is an active-site residue.

This sequence belongs to the GCKR-like family. MurNAc-6-P etherase subfamily. In terms of assembly, homodimer.

The catalysed reaction is N-acetyl-D-muramate 6-phosphate + H2O = N-acetyl-D-glucosamine 6-phosphate + (R)-lactate. The protein operates within amino-sugar metabolism; 1,6-anhydro-N-acetylmuramate degradation. It participates in amino-sugar metabolism; N-acetylmuramate degradation. It functions in the pathway cell wall biogenesis; peptidoglycan recycling. In terms of biological role, specifically catalyzes the cleavage of the D-lactyl ether substituent of MurNAc 6-phosphate, producing GlcNAc 6-phosphate and D-lactate. Together with AnmK, is also required for the utilization of anhydro-N-acetylmuramic acid (anhMurNAc) either imported from the medium or derived from its own cell wall murein, and thus plays a role in cell wall recycling. This Escherichia coli O1:K1 / APEC protein is N-acetylmuramic acid 6-phosphate etherase.